We begin with the raw amino-acid sequence, 743 residues long: ABC-type transporter claG (743 aa).

N-linked (GlcNAc...) asparagine glycosylation is found at N4 and N30. A helical membrane pass occupies residues 124 to 144; sequence SILLDIFLVIVVSWPFPFAWI. N-linked (GlcNAc...) asparagine glycosylation is present at N159. Positions 200-439 constitute an ABC transporter domain; sequence VEFSGISMRP…FQDAGYTFPL (240 aa). Position 234–241 (234–241) interacts with ATP; that stretch reads GPSGSGKS. A run of 5 helical transmembrane segments spans residues 507-527, 560-580, 611-631, 636-656, and 661-681; these read YPSF…IGLS, GMLL…KTFG, IFLS…PIVS, LIVN…ISAI, and NGPL…GCAP.

It belongs to the ABC transporter superfamily. ABCG family.

The protein localises to the membrane. In terms of biological role, ABC-type transporter; part of the cla gene cluster that produces clavatol and ortho-quinone methide. The clavatol biosynthesis cluster cla and the terrestric acid cluster tra are both involved in the production of peniphenones and penilactones. This chain is ABC-type transporter claG, found in Penicillium crustosum (Blue mold fungus).